A 479-amino-acid chain; its full sequence is Ribosomal RNA small subunit methyltransferase F (479 aa).

Residues 125–131, Glu149, Asp176, and Asp194 each bind S-adenosyl-L-methionine; that span reads AAAPGSK. The active-site Nucleophile is Cys247.

Belongs to the class I-like SAM-binding methyltransferase superfamily. RsmB/NOP family.

It localises to the cytoplasm. The catalysed reaction is cytidine(1407) in 16S rRNA + S-adenosyl-L-methionine = 5-methylcytidine(1407) in 16S rRNA + S-adenosyl-L-homocysteine + H(+). Its function is as follows. Specifically methylates the cytosine at position 1407 (m5C1407) of 16S rRNA. The protein is Ribosomal RNA small subunit methyltransferase F of Salmonella paratyphi A (strain ATCC 9150 / SARB42).